The primary structure comprises 977 residues: MASTASYSPSPTSQWRTQKLPKRFNFYVIHNQEFGKLSQSSSLSTSSFPKTLKLPVIHMPINNIQSQTTVCVSTDENLEELVNLQKIPNGFLNKESNKRVFIQDPPWVSSLFMNSLFVRAKQVQGVRREFREIERRRRYAMLRRRQIKAETEAWEQMVEEYRELEREMCEKKLAPNLPYVKKLLLGWFEPLRQAIEKEQNAETTVKHRAAFAPHIDSLPADKMAVIVMHKLMGLLMMGGKEERCVQVVQAAVQIGMAVENEVRIHNFLEKTKKLQKHMTGAQSQEDMSKETMILRKRVKSLIKRNRVVEVRKLMKSEEPESWGRDTQAKLGCRLLELLTETAYVQRPVDQSADTPPDIRPAFRHVFKIATRDPGKNIVKKYGVIECDPLVVAGVDRTVKQMMIPYVPMLVPPKKWRGYDKGGYLFLPSYLMRTHGSRRQQDAVRGVPTKQMQQVYEALDTLGSTKWRVNKRILNVVESIWAGGGNIAGLVDRKDVPIPELSNSDDIMEVKKWKWKVRKSKKINQELHSQRCDTELKLSVARKLKDEEGFYYPHNLDFRGRAYPMHPHLNHLSSDLCRGILEFAEGRPLGKSGLRWLKIHLASLYAGGVEKLCYDARLAFVENHIHDILDSANNPLNGNRWWLNAEDPFQCLAACINLSEALKSSSPHTVISHLPIHQDGSCNGLQHYAALGRDSMEAAAVNLVAGEKPADVYTEIALRVDHIIRGDSIKDPAIDPNALLAKLLIDQVDRKLVKQTVMTSVYGVTYVGAREQIKRRLEEKGLIDDDRLLFTASCYAAKVTLAALGELFQAARGTMTWLGDCAKVIALENQPVRWTTPLGLPVVQPYFKTQRHVIRTSLQILALQREGDAVEVRKQRTAFPPNFVHSLDGSHMMMTAVACRDAGLQFAGVHDSFWTHACDVDQMNRILREKFVELYSLPILEDLLENFQKSYPALTFPPLPKRGDFNLREVLESPYFFN.

The N-terminal 71 residues, 1-71 (MASTASYSPS…NNIQSQTTVC (71 aa)), are a transit peptide targeting the chloroplast. Active-site residues include Asp678, Lys753, and Asp910.

This sequence belongs to the phage and mitochondrial RNA polymerase family.

It is found in the plastid. The protein resides in the chloroplast. It carries out the reaction RNA(n) + a ribonucleoside 5'-triphosphate = RNA(n+1) + diphosphate. Functionally, DNA-dependent RNA polymerase catalyzes the transcription of DNA into RNA using the four ribonucleoside triphosphates as substrates. The polypeptide is DNA-directed RNA polymerase 3B, chloroplastic (RPOT3-TOM) (Nicotiana tabacum (Common tobacco)).